The chain runs to 727 residues: Glycerol-3-phosphate dehydrogenase, mitochondrial (727 aa).

The N-terminal 42 residues, 1–42 (MAFQKAVKGTILVGGGALATVLGLSQFAHYRRKQMNLAYVKA), are a transit peptide targeting the mitochondrion. 71 to 99 (DILVIGGGATGSGCALDAVTRGLKTALVE) is an FAD binding site. Position 601 is a phosphotyrosine (Tyr-601). EF-hand domains lie at 623-658 (SDID…INVQ) and 659-694 (MDEN…IQKG). Ca(2+) is bound by residues Asp-672, Asn-674, Asn-676, Gln-678, and Glu-683.

The protein belongs to the FAD-dependent glycerol-3-phosphate dehydrogenase family. FAD serves as cofactor.

It localises to the mitochondrion. It carries out the reaction a quinone + sn-glycerol 3-phosphate = dihydroxyacetone phosphate + a quinol. It participates in polyol metabolism; glycerol degradation via glycerol kinase pathway; glycerone phosphate from sn-glycerol 3-phosphate (anaerobic route): step 1/1. Calcium-binding enhance the activity of the enzyme. Functionally, calcium-responsive mitochondrial glycerol-3-phosphate dehydrogenase which seems to be a key component of the pancreatic beta-cell glucose-sensing device. This Homo sapiens (Human) protein is Glycerol-3-phosphate dehydrogenase, mitochondrial.